The following is a 335-amino-acid chain: MESSFSFGVILAVLASLIIATNTLVAVAVLLLIHKNDGVSLCFTLNLAVADTLIGVAISGLLTDQLSSPSRPTQKTLCSLRMAFVTSSAAASVLTVMLITFDRYLAIKQPFRYLKIMSGFVAGACIAGLWLVSYLIGFLPLGIPMFQQTAYKGQCSFFAVFHPHFVLTLSCVGFFPAMLLFVFFYCDMLKIASMHSQQIRKMEHAGAMAGGYRSPRTPSDFKALRTVSVLIGSFALSWTPFLITGIVQVACQECHLYLVLERYLWLLGVGNSLLNPLIYAYWQKEVRLQLYHMALGVKKVLTSFLLFLSARNCGPERPRESSCHIVTISSSEFDG.

The Extracellular portion of the chain corresponds to 1-12; it reads MESSFSFGVILA. A helical membrane pass occupies residues 13-33; it reads VLASLIIATNTLVAVAVLLLI. The Cytoplasmic portion of the chain corresponds to 34 to 37; that stretch reads HKND. Residues 38 to 58 traverse the membrane as a helical segment; it reads GVSLCFTLNLAVADTLIGVAI. Over 59-81 the chain is Extracellular; that stretch reads SGLLTDQLSSPSRPTQKTLCSLR. The chain crosses the membrane as a helical span at residues 82-102; it reads MAFVTSSAAASVLTVMLITFD. Residues 103-125 lie on the Cytoplasmic side of the membrane; it reads RYLAIKQPFRYLKIMSGFVAGAC. Residues 126 to 146 traverse the membrane as a helical segment; sequence IAGLWLVSYLIGFLPLGIPMF. Over 147–164 the chain is Extracellular; sequence QQTAYKGQCSFFAVFHPH. A helical transmembrane segment spans residues 165-185; that stretch reads FVLTLSCVGFFPAMLLFVFFY. Residues 186 to 226 are Cytoplasmic-facing; sequence CDMLKIASMHSQQIRKMEHAGAMAGGYRSPRTPSDFKALRT. Residues 227–247 form a helical membrane-spanning segment; the sequence is VSVLIGSFALSWTPFLITGIV. At 248 to 262 the chain is on the extracellular side; sequence QVACQECHLYLVLER. Residues 263–283 form a helical membrane-spanning segment; sequence YLWLLGVGNSLLNPLIYAYWQ. Residues 284 to 335 are Cytoplasmic-facing; it reads KEVRLQLYHMALGVKKVLTSFLLFLSARNCGPERPRESSCHIVTISSSEFDG.

The protein belongs to the G-protein coupled receptor 1 family. Predominantly expressed in the pancreas, especially in the islets.

It is found in the cell membrane. Receptor for the endogenous fatty-acid ethanolamide oleoylethanolamide (OEA) and lysophosphatidylcholine (LPC). Functions as a glucose-dependent insulinotropic receptor. The activity of this receptor is mediated by G proteins which activate adenylate cyclase. Seems to act through a G(s) mediated pathway. This chain is Glucose-dependent insulinotropic receptor (GPR119), found in Homo sapiens (Human).